A 363-amino-acid polypeptide reads, in one-letter code: UDP-N-acetylenolpyruvoylglucosamine reductase (363 aa).

The 177-residue stretch at 25–201 (IGPVARRMLT…RSAPVRYREL (177 aa)) folds into the FAD-binding PCMH-type domain. The active site involves Arg-168. The active-site Proton donor is the Ser-249. Glu-352 is a catalytic residue.

Belongs to the MurB family. The cofactor is FAD.

Its subcellular location is the cytoplasm. The catalysed reaction is UDP-N-acetyl-alpha-D-muramate + NADP(+) = UDP-N-acetyl-3-O-(1-carboxyvinyl)-alpha-D-glucosamine + NADPH + H(+). The protein operates within cell wall biogenesis; peptidoglycan biosynthesis. In terms of biological role, cell wall formation. In Mycolicibacterium smegmatis (strain ATCC 700084 / mc(2)155) (Mycobacterium smegmatis), this protein is UDP-N-acetylenolpyruvoylglucosamine reductase.